The chain runs to 361 residues: Phosphoserine aminotransferase (361 aa).

Arg43 lines the L-glutamate pocket. Residues 77–78 (AS), Trp103, Thr153, Asp173, and Gln196 each bind pyridoxal 5'-phosphate. Lys197 carries the N6-(pyridoxal phosphate)lysine modification. 238–239 (NT) contributes to the pyridoxal 5'-phosphate binding site.

The protein belongs to the class-V pyridoxal-phosphate-dependent aminotransferase family. SerC subfamily. Homodimer. Pyridoxal 5'-phosphate serves as cofactor.

The protein resides in the cytoplasm. It carries out the reaction O-phospho-L-serine + 2-oxoglutarate = 3-phosphooxypyruvate + L-glutamate. The catalysed reaction is 4-(phosphooxy)-L-threonine + 2-oxoglutarate = (R)-3-hydroxy-2-oxo-4-phosphooxybutanoate + L-glutamate. It functions in the pathway amino-acid biosynthesis; L-serine biosynthesis; L-serine from 3-phospho-D-glycerate: step 2/3. The protein operates within cofactor biosynthesis; pyridoxine 5'-phosphate biosynthesis; pyridoxine 5'-phosphate from D-erythrose 4-phosphate: step 3/5. In terms of biological role, catalyzes the reversible conversion of 3-phosphohydroxypyruvate to phosphoserine and of 3-hydroxy-2-oxo-4-phosphonooxybutanoate to phosphohydroxythreonine. The sequence is that of Phosphoserine aminotransferase from Pseudomonas fluorescens (strain SBW25).